The sequence spans 458 residues: Tyrosine phenol-lyase (458 aa).

Lysine 258 bears the N6-(pyridoxal phosphate)lysine mark.

This sequence belongs to the beta-eliminating lyase family. Homotetramer. Pyridoxal 5'-phosphate is required as a cofactor.

The enzyme catalyses L-tyrosine + H2O = phenol + pyruvate + NH4(+). The chain is Tyrosine phenol-lyase (tpl) from Symbiobacterium sp. (strain SC-1).